The chain runs to 251 residues: MAEPRTLVLLRHGNSDWNQKNLFTGWVDVELSEQGVAEGQRAGELLAESGILPDVLHTSVLIRAIDTANIALKRAGRSWIPVQRTWRLNERHYGALQGKDKAQTLAEYGPEQFATWRRSFDVPPPPIDDDDEYSQSRDPRYADLGDALPRTECLKDVIERMLPYWESDIQPDLASGRTVLVTAHGNSLRALVKHLDGISDADIAELNIPTGIPLVYRLDEDYRPIVPGGEYLDPEAAAAGAAAVAAQGSKK.

Residues 11–18, 24–25, arginine 63, 90–93, lysine 101, 117–118, and 185–186 contribute to the substrate site; these read RHGNSDWN, TG, ERHY, RR, and GN. Residue histidine 12 is the Tele-phosphohistidine intermediate of the active site. The active-site Proton donor/acceptor is the glutamate 90. Residues 117–142 are disordered; sequence RRSFDVPPPPIDDDDEYSQSRDPRYA.

The protein belongs to the phosphoglycerate mutase family. BPG-dependent PGAM subfamily.

The enzyme catalyses (2R)-2-phosphoglycerate = (2R)-3-phosphoglycerate. The protein operates within carbohydrate degradation; glycolysis; pyruvate from D-glyceraldehyde 3-phosphate: step 3/5. Functionally, catalyzes the interconversion of 2-phosphoglycerate and 3-phosphoglycerate. The chain is 2,3-bisphosphoglycerate-dependent phosphoglycerate mutase from Clavibacter michiganensis subsp. michiganensis (strain NCPPB 382).